A 143-amino-acid polypeptide reads, in one-letter code: Peptide methionine sulfoxide reductase MsrB (143 aa).

The 124-residue stretch at 16 to 139 (DAELRRRLTP…NSAALNFESR (124 aa)) folds into the MsrB domain. Cysteine 55, cysteine 58, cysteine 104, and cysteine 107 together coordinate Zn(2+). The active-site Nucleophile is cysteine 128.

This sequence belongs to the MsrB Met sulfoxide reductase family. Requires Zn(2+) as cofactor.

It carries out the reaction L-methionyl-[protein] + [thioredoxin]-disulfide + H2O = L-methionyl-(R)-S-oxide-[protein] + [thioredoxin]-dithiol. The polypeptide is Peptide methionine sulfoxide reductase MsrB (Burkholderia ambifaria (strain MC40-6)).